The primary structure comprises 174 residues: MKIGPVGKHDARSTTIVNWDEGSHDGFISQIFLSHGVAGIMSIQFQFVMDGKLVLSDRHGPFSGNMFDVIELNYPHEYITGISGEYYKYEANNPHMRSLKFNTNTSEYGPFGTSGSSNDKFAFKLGKSPQFGGFHGTYDASGLQYIGVYLRPKTVLPKIDTGNAEETESKIVLG.

Positions methionine 1–proline 152 constitute a Jacalin-type lectin domain.

This sequence belongs to the jacalin lectin family. As to quaternary structure, self-interacts. Interacts with RTM3. As to expression, expressed at low levels exclusively in phloem-associated cells (e.g. sieve elements and adjacent cells).

Its subcellular location is the cytoplasm. In terms of biological role, required for the restriction of long-distance movement of the pathogenic tobacco etch virus (TEV) without causing a hypersensitive response or inducing systemic acquired resistance. The chain is Protein RESTRICTED TEV MOVEMENT 1 (RTM1) from Arabidopsis thaliana (Mouse-ear cress).